We begin with the raw amino-acid sequence, 437 residues long: Mannan endo-1,4-beta-mannosidase A (437 aa).

The signal sequence occupies residues 1–19 (MMMLSKSLLSAATAASALA). A propeptide spanning residues 20–27 (AVLQPVPR) is cleaved from the precursor. Positions 28 to 376 (ASSFVTISGT…VDAINGGTTT (349 aa)) are catalytic. C53 and C56 are joined by a disulfide. Residues N157 and N184 are each glycosylated (N-linked (GlcNAc...) asparagine). The Proton donor/acceptor role is filled by E196. 196–198 (EPR) contributes to the substrate binding site. C199 and C202 form a disulfide bridge. Substrate is bound by residues E232 and W274. An N-linked (GlcNAc...) asparagine glycan is attached at N277. A disulfide bridge links C292 with C299. The active-site Nucleophile is the E303. The cysteines at positions 311 and 361 are disulfide-linked. N355 is a glycosylation site (N-linked (GlcNAc...) asparagine). Residues 372-399 (GGTTTPPPVSSTTTTSSRTSSTPPPPGG) form a disordered region. Residues 377–399 (PPPVSSTTTTSSRTSSTPPPPGG) are linker. Residues 381-392 (SSTTTTSSRTSS) show a composition bias toward low complexity. Residues 400-435 (SCSPLYGQCGGSGYTGPTCCAQGTCIYSNYWYSQCL) form the CBM1 domain.

Belongs to the glycosyl hydrolase 5 (cellulase A) family. Monomer.

It localises to the secreted. It carries out the reaction Random hydrolysis of (1-&gt;4)-beta-D-mannosidic linkages in mannans, galactomannans and glucomannans.. In terms of biological role, endo-1,4-mannanase that catalyzes the random hydrolysis of (1-&gt;4)-beta-D-mannosidic linkages in mannans and heteromannans. It is a crucial enzyme for depolymerization of seed galactomannans and wood galactoglucomannans. Active against locust bean gum and ivory nut mannan, releasing mainly tri- and disaccharides. Also has transglycosylation activity. Transglycosylation of two mannotrioses into a mannohexaose is the major transglycosylation route. This Hypocrea jecorina (strain ATCC 56765 / BCRC 32924 / NRRL 11460 / Rut C-30) (Trichoderma reesei) protein is Mannan endo-1,4-beta-mannosidase A.